The chain runs to 452 residues: uncharacterized protein (452 aa).

Helical transmembrane passes span 18 to 38 (PIIESDLEVIVIALGGYVLAK), 81 to 101 (LLPVFYVIISAASILISFLLA), 269 to 289 (IVLLLDFFSPPLYSLFIALFI), 317 to 337 (AGQVAVPMILVVLGASLATDI), 354 to 374 (VIIVCLLGRMVVVPLALLPAF), 390 to 410 (VFVVVIFLLVGSPTAIQLTQI), and 428 to 448 (SYAVFTPPNSLLLAFASLLVV).

It belongs to the auxin efflux carrier (TC 2.A.69) family.

The protein resides in the membrane. This is an uncharacterized protein from Schizosaccharomyces pombe (strain 972 / ATCC 24843) (Fission yeast).